Reading from the N-terminus, the 292-residue chain is Homoserine kinase (292 aa).

81–91 is a binding site for ATP; it reads RPRSGLGSSGA.

Belongs to the GHMP kinase family. Homoserine kinase subfamily.

The protein localises to the cytoplasm. The enzyme catalyses L-homoserine + ATP = O-phospho-L-homoserine + ADP + H(+). It functions in the pathway amino-acid biosynthesis; L-threonine biosynthesis; L-threonine from L-aspartate: step 4/5. Functionally, catalyzes the ATP-dependent phosphorylation of L-homoserine to L-homoserine phosphate. In Thermococcus kodakarensis (strain ATCC BAA-918 / JCM 12380 / KOD1) (Pyrococcus kodakaraensis (strain KOD1)), this protein is Homoserine kinase.